The following is a 460-amino-acid chain: Elongation factor 1-alpha (460 aa).

At Gly-2 the chain carries N,N,N-trimethylglycine. Lys-3 carries the post-translational modification N6,N6-dimethyllysine; alternate. Lys-3 carries the post-translational modification N6-methyllysine; alternate. The tr-type G domain maps to 6-241; the sequence is KTHINVVVIG…DAIEPPKRPT (236 aa). A G1 region spans residues 15–22; the sequence is GHVDSGKS. 15–22 serves as a coordination point for GTP; sequence GHVDSGKS. At Lys-31 the chain carries N6-methyllysine. Positions 71-75 are G2; that stretch reads GITID. Lys-80 carries the post-translational modification N6,N6,N6-trimethyllysine. A G3 region spans residues 92-95; it reads DAPG. GTP contacts are provided by residues 92–96 and 154–157; these read DAPGH and NKMD. The segment at 154–157 is G4; it reads NKMD. Residues 193–195 are G5; sequence SGF. Position 317 is an N6,N6-dimethyllysine; alternate (Lys-317). At Lys-317 the chain carries N6-methyllysine; alternate. N6-methyllysine is present on Lys-391.

It belongs to the TRAFAC class translation factor GTPase superfamily. Classic translation factor GTPase family. EF-Tu/EF-1A subfamily.

It localises to the cytoplasm. This protein promotes the GTP-dependent binding of aminoacyl-tRNA to the A-site of ribosomes during protein biosynthesis. The chain is Elongation factor 1-alpha (tef-1) from Neurospora crassa (strain ATCC 24698 / 74-OR23-1A / CBS 708.71 / DSM 1257 / FGSC 987).